A 157-amino-acid polypeptide reads, in one-letter code: Protein Smg homolog (157 aa).

Belongs to the Smg family.

The protein is Protein Smg homolog of Shewanella woodyi (strain ATCC 51908 / MS32).